We begin with the raw amino-acid sequence, 302 residues long: Glycine--tRNA ligase alpha subunit (302 aa).

It belongs to the class-II aminoacyl-tRNA synthetase family. As to quaternary structure, tetramer of two alpha and two beta subunits.

It is found in the cytoplasm. It carries out the reaction tRNA(Gly) + glycine + ATP = glycyl-tRNA(Gly) + AMP + diphosphate. This is Glycine--tRNA ligase alpha subunit from Xanthomonas euvesicatoria pv. vesicatoria (strain 85-10) (Xanthomonas campestris pv. vesicatoria).